The chain runs to 363 residues: MKNFILLAVSSILLVDLLPTHFEHNVDLSRAINVNGVSFNNVDTSSLGAQQVRQSASRGRGLGEKPKEGADKEKKKEKGKEKEEEPKKPNENKLKQPNEGQPQAQGDGANAGQPQAQGDGANAGQPQAQGDGANAGQPQAQGDGANAGQPQAQGDGANAGQPQAQGDGANAGQPQAQGDGANAGQPQAQGDGANAGQPQAQGDGANAGQPQAQGDGANAGQPQAQGDGANAGQPQAQGDGANVPRQGRNGGGAPAGGNEGNKQAGKGQGQNNQGANAPNEKVVNDYLHKIRSSVTTEWTPCSVTCGNGVRIRRKAHAGNKKAEDLTMDDLEVEACVMDKCAGIFNVVSNSLGLVILLVLALFN.

An N-terminal signal peptide occupies residues 1–22 (MKNFILLAVSSILLVDLLPTHF). Polar residues predominate over residues 48-57 (GAQQVRQSAS). The tract at residues 48 to 278 (GAQQVRQSAS…GQNNQGANAP (231 aa)) is disordered. Residues 61 to 96 (GLGEKPKEGADKEKKKEKGKEKEEEPKKPNENKLKQ) are compositionally biased toward basic and acidic residues. The segment at 80–88 (KEKEEEPKK) is required for the binding to heparan sulfate proteoglycans (HSPGs) on the surface of host hepatocytes. The interval 93 to 97 (KLKQP) is region I; contains the proteolytic cleavage site. Residues 98–109 (NEGQPQAQGDGA) form a 1; approximate repeat. Residues 98–241 (NEGQPQAQGD…GQPQAQGDGA (144 aa)) are 12 X 12 AA approximate tandem repeats of N-A-G-Q-P-Q-A-Q-G-D-G-A. Repeat copies occupy residues 110–121 (NAGQPQAQGDGA), 122–133 (NAGQPQAQGDGA), 134–145 (NAGQPQAQGDGA), 146–157 (NAGQPQAQGDGA), 158–169 (NAGQPQAQGDGA), 170–181 (NAGQPQAQGDGA), 182–193 (NAGQPQAQGDGA), 194–205 (NAGQPQAQGDGA), 206–217 (NAGQPQAQGDGA), 218–229 (NAGQPQAQGDGA), and 230–241 (NAGQPQAQGDGA). Residues 248 to 259 (RNGGGAPAGGNE) are compositionally biased toward gly residues. Residues 260 to 277 (GNKQAGKGQGQNNQGANA) show a composition bias toward low complexity. The region spanning 289 to 341 (KIRSSVTTEWTPCSVTCGNGVRIRRKAHAGNKKAEDLTMDDLEVEACVMDKCA) is the TSP type-1 domain. Intrachain disulfides connect Cys301–Cys335 and Cys305–Cys340. Residue Thr304 is glycosylated (O-linked (Fuc) threonine). The GPI-anchor amidated cysteine moiety is linked to residue Cys340. A propeptide spans 341 to 363 (AGIFNVVSNSLGLVILLVLALFN) (removed in mature form).

This sequence belongs to the plasmodium circumsporozoite protein family. Post-translationally, during host cell invasion, proteolytically cleaved at the cell membrane in the region I by a papain-like cysteine protease of parasite origin. Cleavage is triggered by the sporozoite contact with highly sulfated heparan sulfate proteoglycans (HSPGs) present on the host hepatocyte cell surface. Cleavage exposes the TSP type-1 (TSR) domain and is required for productive invasion of host hepatocytes but not for adhesion to the host cell membrane. Cleavage is dispensable for sporozoite development in the oocyst, motility and for traversal of host and vector cells. In terms of processing, O-glycosylated; maybe by POFUT2.

It localises to the cell membrane. The protein localises to the cytoplasm. Its function is as follows. Essential sporozoite protein. In the mosquito vector, required for sporozoite development in the oocyst, migration through the vector hemolymph and entry into the vector salivary glands. In the vertebrate host, required for sporozoite migration through the host dermis and infection of host hepatocytes. Binds to highly sulfated heparan sulfate proteoglycans (HSPGs) on the surface of host hepatocytes. In terms of biological role, in the vertebrate host, binds to highly sulfated heparan sulfate proteoglycans (HSPGs) on the surface of host hepatocytes and is required for sporozoite invasion of the host hepatocytes. The polypeptide is Circumsporozoite protein (Plasmodium knowlesi (strain H)).